We begin with the raw amino-acid sequence, 723 residues long: Threonine--tRNA ligase 1, cytoplasmic (723 aa).

Over residues 1-10 the composition is skewed to polar residues; that stretch reads MSEEQASSPS. The segment at 1-49 is disordered; it reads MSEEQASSPSAKMGDEEKPVGAGEEKQKEGSKKKNKEGSGDGGRAELNP. The span at 13–39 shows a compositional bias: basic and acidic residues; the sequence is MGDEEKPVGAGEEKQKEGSKKKNKEGS. S39 bears the Phosphoserine mark. Residues 79 to 143 form the TGS domain; sequence DSKPIKVTLP…EEDCTLELLK (65 aa). K243 is subject to N6-acetyllysine. T246 carries the phosphothreonine modification. A Phosphotyrosine modification is found at Y298. Residue T453 is modified to Phosphothreonine. S702 is modified (phosphoserine).

It belongs to the class-II aminoacyl-tRNA synthetase family. In terms of assembly, homodimer. ISGylated.

The protein localises to the cytoplasm. It carries out the reaction tRNA(Thr) + L-threonine + ATP = L-threonyl-tRNA(Thr) + AMP + diphosphate + H(+). Catalyzes the attachment of threonine to tRNA(Thr) in a two-step reaction: threonine is first activated by ATP to form Thr-AMP and then transferred to the acceptor end of tRNA(Thr). Also edits incorrectly charged tRNA(Thr) via its editing domain, at the post-transfer stage. This chain is Threonine--tRNA ligase 1, cytoplasmic (TARS1), found in Bos taurus (Bovine).